The chain runs to 327 residues: MTTQQIVLQGPGPWGFRLVGGKDFEQPLAISRVTPGSKAAIANLCIGDLITAIDGEDTSSMTHLEAQNKIKGCVDNMTLTVSRSEQKIWSPLVTEEGKRHPYKMNLASEPQEVLHIGSAHNRSAMPFTASPAPGTRVITNQYNSPTGLYSSENISNFNNAVESKTSASGEEANSRPSAQPHPSGGLIIDKESEVYKMLQEKQELNEPPKQSTSFLVLQEILESDGKGDPNKPSGFRSVKAPVTKVAASVGNAQKLPICDKCGTGIVGVFVKLRDHHRHPECYVCTDCGINLKQKGHFFVGDQIYCEKHARERVTPPEGYDVVTVFPK.

The residue at position 2 (T2) is an N-acetylthreonine. A PDZ domain is found at 3–85 (TQQIVLQGPG…NMTLTVSRSE (83 aa)). Phosphoserine is present on residues S90 and S130. Y142 is subject to Phosphotyrosine. The interval 161–186 (VESKTSASGEEANSRPSAQPHPSGGL) is disordered. Residues 256–315 (PICDKCGTGIVGVFVKLRDHHRHPECYVCTDCGINLKQKGHFFVGDQIYCEKHARERVTP) enclose the LIM zinc-binding domain. Positions 258, 261, 278, 281, 284, 287, 305, and 308 each coordinate Zn(2+). T314 carries the post-translational modification Phosphothreonine. Y319 carries the phosphotyrosine modification.

Interacts with ACTN1. Interacts with ACTN2 and ACTN4. Interacts with PDLIM4. Expressed most abundantly in heart, lung and liver, moderately in spleen and skeletal muscle, and at extremely low levels (if at all) in testis and brain tissues.

It localises to the cytoplasm. The protein localises to the cytoskeleton. The protein resides in the myofibril. Its subcellular location is the sarcomere. It is found in the z line. In terms of biological role, cytoskeletal protein that may act as an adapter that brings other proteins (like kinases) to the cytoskeleton. Involved in assembly, disassembly and directioning of stress fibers in fibroblasts. Required for the localization of ACTN1 and PALLD to stress fibers. Required for cell migration and in maintaining cell polarity of fibroblasts. In Rattus norvegicus (Rat), this protein is PDZ and LIM domain protein 1 (Pdlim1).